The following is a 595-amino-acid chain: Aspartate--tRNA ligase (595 aa).

Residue E176 participates in L-aspartate binding. An aspartate region spans residues 200–203; that stretch reads QIFK. R222 contributes to the L-aspartate binding site. Residues 222–224 and Q231 contribute to the ATP site; that span reads RDE. H450 is an L-aspartate binding site. E484 contacts ATP. R491 contributes to the L-aspartate binding site. ATP is bound at residue 536–539; it reads GLDR.

Belongs to the class-II aminoacyl-tRNA synthetase family. Type 1 subfamily. As to quaternary structure, homodimer.

The protein resides in the cytoplasm. It catalyses the reaction tRNA(Asp) + L-aspartate + ATP = L-aspartyl-tRNA(Asp) + AMP + diphosphate. Functionally, catalyzes the attachment of L-aspartate to tRNA(Asp) in a two-step reaction: L-aspartate is first activated by ATP to form Asp-AMP and then transferred to the acceptor end of tRNA(Asp). The chain is Aspartate--tRNA ligase from Halalkalibacterium halodurans (strain ATCC BAA-125 / DSM 18197 / FERM 7344 / JCM 9153 / C-125) (Bacillus halodurans).